We begin with the raw amino-acid sequence, 81 residues long: Cytotoxin 1 (81 aa).

The N-terminal stretch at 1-21 (MKTLLLTLVVVTIVCLDLGYT) is a signal peptide. Cystine bridges form between cysteine 24–cysteine 42, cysteine 35–cysteine 59, cysteine 63–cysteine 74, and cysteine 75–cysteine 80.

The protein belongs to the three-finger toxin family. Short-chain subfamily. Type IA cytotoxin sub-subfamily. Monomer in solution; Homodimer and oligomer in the presence of negatively charged lipids forming a pore with a size ranging between 20 and 30 Angstroms. In terms of tissue distribution, expressed by the venom gland.

The protein resides in the secreted. It is found in the target cell membrane. In terms of biological role, basic protein that binds to cell membrane and depolarizes cardiomyocytes. It also shows lytic activities on many other cells, including red blood cells. Interaction with sulfatides in the cell membrane induces pore formation and cell internalization and is responsible for cytotoxicity in cardiomyocytes. It targets the mitochondrial membrane and induces mitochondrial swelling and fragmentation. It binds to the integrin alpha-V/beta-3 (ITGAV/ITGB3) with a moderate affinity and inhibits protein kinases C. It also binds with high affinity to heparin. It also causes skeletal muscle necrosis after intramuscular injection into mice. This chain is Cytotoxin 1, found in Naja atra (Chinese cobra).